The following is a 798-amino-acid chain: Integrin beta-7 (798 aa).

Residues 1-19 (MVALPMVLVLLLVLSRGES) form the signal peptide. Over 20 to 723 (ELDAKIPSTG…VRPQEKGADH (704 aa)) the chain is Extracellular. The PSI domain occupies 44-92 (SCQPAPSCQKCILSHPSCAWCKQLNFTASGEAEARRCARREELLARGCP). Intrachain disulfides connect Cys-51-Cys-476, Cys-54-Cys-80, Cys-64-Cys-91, Cys-216-Cys-223, Cys-271-Cys-311, Cys-412-Cys-428, and Cys-448-Cys-474. Asn-68 carries an N-linked (GlcNAc...) asparagine glycan. A disordered region spans residues 98–124 (EPRGQQEVLQDQPLSQGARGEGATQLA). Residues 150–389 (YPVDLYYLMD…QLIMDAYNSL (240 aa)) enclose the VWFA domain. Ser-161 and Ser-163 together coordinate Mg(2+). Residues Ser-163, Asp-166, Asp-167, and Asp-198 each coordinate Ca(2+). The Ca(2+) site is built by Asn-254, Asp-256, Pro-258, and Glu-259. Glu-259 is a binding site for Mg(2+). Asn-279 carries an N-linked (GlcNAc...) asparagine glycan. Residues Asp-289 and Glu-373 each coordinate Ca(2+). N-linked (GlcNAc...) asparagine glycosylation occurs at Asn-434. N-linked (GlcNAc...) asparagine glycosylation is present at Asn-477. Intrachain disulfides connect Cys-478-Cys-497, Cys-488-Cys-500, Cys-502-Cys-511, Cys-513-Cys-545, Cys-527-Cys-543, Cys-537-Cys-548, Cys-550-Cys-559, Cys-561-Cys-582, Cys-566-Cys-580, Cys-574-Cys-585, Cys-587-Cys-596, Cys-598-Cys-621, Cys-605-Cys-619, Cys-613-Cys-624, Cys-626-Cys-635, Cys-638-Cys-641, Cys-645-Cys-688, Cys-651-Cys-670, and Cys-654-Cys-666. 4 I-EGF domains span residues 478-512 (CSDT…RLCE), 513-560 (CSVA…HLCE), 561-597 (CDDA…RACE), and 598-636 (CSGD…ALCD). Asn-531 carries N-linked (GlcNAc...) asparagine glycosylation. A glycan (N-linked (GlcNAc...) asparagine) is linked at Asn-590. N-linked (GlcNAc...) asparagine glycosylation is found at Asn-665 and Asn-674. The helical transmembrane segment at 724-746 (TQAIVLGCVGGIVAVGLGLVLAY) threads the bilayer. The Cytoplasmic segment spans residues 747-798 (RLSVEIYDRREYSRFEKEQQQLNWKQDSNPLYKSAITTTINPRFQEADSPTL). Tyr-778 carries the post-translational modification Phosphotyrosine; by Tyr-kinases.

This sequence belongs to the integrin beta chain family. Heterodimer of an alpha and a beta subunit. ITGB7/beta-7 associates with either ITGA4/alpha-4 or ITGAE/alpha-E. Integrin ITGA4/ITGB7 interacts with MADCAM1. Integrin ITGA4/ITGB7 interacts with VCAM1 and fibronectin. Interacts with FLNA (via filamin repeats 4, 9, 12, 17, 19, 21, and 23). As to quaternary structure, (Microbial infection) May interact with HIV-1 gp120. Expressed in a variety of leukocyte lines.

It is found in the cell membrane. Integrin ITGA4/ITGB7 (alpha-4/beta-7) (Peyer patches-specific homing receptor LPAM-1) is an adhesion molecule that mediates lymphocyte migration and homing to gut-associated lymphoid tissue (GALT). Integrin ITGA4/ITGB7 interacts with the cell surface adhesion molecules MADCAM1 which is normally expressed by the vascular endothelium of the gastrointestinal tract. Also interacts with VCAM1 and fibronectin, an extracellular matrix component. It recognizes one or more domains within the alternatively spliced CS-1 region of fibronectin. Interactions involve the tripeptide L-D-T in MADCAM1, and L-D-V in fibronectin. Integrin ITGAE/ITGB7 (alpha-E/beta-7, HML-1) is a receptor for E-cadherin. Its function is as follows. (Microbial infection) Binds to HIV-1 gp120, thereby allowing the virus to enter GALT, which is thought to be the major trigger of AIDS disease. Interaction would involve a tripeptide L-D-I in HIV-1 gp120. This is Integrin beta-7 (ITGB7) from Homo sapiens (Human).